Here is a 257-residue protein sequence, read N- to C-terminus: 5'-nucleotidase SurE (257 aa).

Positions 8, 9, 40, and 92 each coordinate a divalent metal cation.

It belongs to the SurE nucleotidase family. The cofactor is a divalent metal cation.

Its subcellular location is the cytoplasm. The catalysed reaction is a ribonucleoside 5'-phosphate + H2O = a ribonucleoside + phosphate. In terms of biological role, nucleotidase that shows phosphatase activity on nucleoside 5'-monophosphates. This is 5'-nucleotidase SurE from Rhizobium rhizogenes (strain K84 / ATCC BAA-868) (Agrobacterium radiobacter).